The primary structure comprises 119 residues: Holo-[acyl-carrier-protein] synthase (119 aa).

Residues aspartate 8 and glutamate 59 each coordinate Mg(2+).

This sequence belongs to the P-Pant transferase superfamily. AcpS family. The cofactor is Mg(2+).

Its subcellular location is the cytoplasm. It catalyses the reaction apo-[ACP] + CoA = holo-[ACP] + adenosine 3',5'-bisphosphate + H(+). Its function is as follows. Transfers the 4'-phosphopantetheine moiety from coenzyme A to a Ser of acyl-carrier-protein. This is Holo-[acyl-carrier-protein] synthase from Lactococcus lactis subsp. cremoris (strain SK11).